The following is a 108-amino-acid chain: Cell wall protein PGA48 (108 aa).

Positions 1–17 (MFKFVIYLFTFIAFANA) are cleaved as a signal peptide. N-linked (GlcNAc...) asparagine glycosylation is found at N18, N41, and N77. N84 is lipidated: GPI-anchor amidated asparagine. Positions 85–108 (GASKLNLRSLAGAGLVAAIFIAFI) are cleaved as a propeptide — removed in mature form.

It belongs to the SED1 family. Post-translationally, the GPI-anchor is attached to the protein in the endoplasmic reticulum and serves to target the protein to the cell surface. There, the glucosamine-inositol phospholipid moiety is cleaved off and the GPI-modified mannoprotein is covalently attached via its lipidless GPI glycan remnant to the 1,6-beta-glucan of the outer cell wall layer.

It is found in the secreted. It localises to the cell wall. The protein resides in the membrane. Its function is as follows. Cell wall protein that plays a role in adaptation and resistance to cell wall stress. In Candida albicans (strain SC5314 / ATCC MYA-2876) (Yeast), this protein is Cell wall protein PGA48 (PGA48).